We begin with the raw amino-acid sequence, 133 residues long: Protransforming growth factor alpha (133 aa).

A signal peptide spans 1–23 (MVPSAGQLALFALGIFLAVCQAL). Residues 24 to 38 (ENSTSALSDPPVAAA) constitute a propeptide, removed in mature form. At 24-97 (ENSTSALSDP…AVVAASQKKQ (74 aa)) the chain is on the extracellular side. Asn-25 carries an N-linked (GlcNAc...) asparagine glycan. Residues 42–82 (HFNDCPDSHTQFCFHGTCRFLLQEEKPACVCHSGYVGARCE) enclose the EGF-like domain. 3 disulfides stabilise this stretch: Cys-46-Cys-59, Cys-54-Cys-70, and Cys-72-Cys-81. The propeptide at 89-133 (VVAASQKKQAITALVVVTIVALAVLIITCVLIHCCEVRKHSVVVP) is removed in mature form. A helical transmembrane segment spans residues 98–120 (AITALVVVTIVALAVLIITCVLI). Residues 121-133 (HCCEVRKHSVVVP) lie on the Cytoplasmic side of the membrane.

Interacts with the PDZ domains of MAGI3, SDCBP and SNTA1. The interaction with SDCBP, is required for the targeting to the cell surface. In the endoplasmic reticulum, in its immature form (i.e. with a prosegment and lacking full N-glycosylation), interacts with CNIH. In the Golgi apparatus, may form a complex with CNIH and GORASP2. Interacts (via cytoplasmic C-terminal domain) with NKD2. As to expression, skin.

It is found in the secreted. The protein resides in the extracellular space. The protein localises to the cell membrane. Functionally, TGF alpha is a mitogenic polypeptide that is able to bind to the EGF receptor/EGFR and to act synergistically with TGF beta to promote anchorage-independent cell proliferation in soft agar. The polypeptide is Protransforming growth factor alpha (TGFA) (Ovis aries (Sheep)).